The sequence spans 346 residues: Parapinopsin (346 aa).

Topologically, residues 1–29 (MASIILINFSETDTLHLGSVNDHIMPRIG) are extracellular. A glycan (N-linked (GlcNAc...) asparagine) is linked at N8. The helical transmembrane segment at 30–54 (YTILSIIMALSSTFGIILNMVVIIV) threads the bilayer. The Cytoplasmic portion of the chain corresponds to 55-66 (TVRYKQLRQPLN). The helical transmembrane segment at 67 to 91 (YALVNLAVADLGCPVFGGLLTAVTN) threads the bilayer. Over 92 to 106 (AMGYFSLGRVGCVLE) the chain is Extracellular. A disulfide bridge connects residues C103 and C180. Residues 107–126 (GFAVAFFGIAGLCSVAVIAV) form a helical membrane-spanning segment. Over 127–145 (DRYMVVCRPLGAVMFQTKH) the chain is Cytoplasmic. The helical transmembrane segment at 146-169 (ALAGVVFSWVWSFIWNTPPLFGWG) threads the bilayer. Residues 170-193 (SYQLEGVMTSCAPNWYRRDPVNVS) lie on the Extracellular side of the membrane. N-linked (GlcNAc...) asparagine glycosylation occurs at N191. The helical transmembrane segment at 194–221 (YILCYFMLCFALPFATIIFSYMHLLHTL) threads the bilayer. The Cytoplasmic segment spans residues 222–244 (WQVAKLQVADSGSTAKVEVQVAR). A helical transmembrane segment spans residues 245 to 268 (MVVIMVMAFLLTWLPYAAFALTVI). At 269-276 (IDSNIYIN) the chain is on the extracellular side. The helical transmembrane segment at 277 to 301 (PVIGTIPAYLAKSSTVFNPIIYIFM) threads the bilayer. The residue at position 288 (K288) is an N6-(retinylidene)lysine. The Cytoplasmic segment spans residues 302–346 (NRQFRDYALPCLLCGKNPWAAKEGRDSDTNTLTTTVSKNTSVSPL). A lipid anchor (S-palmitoyl cysteine) is attached at C315. The tract at residues 325-346 (GRDSDTNTLTTTVSKNTSVSPL) is disordered. Residues 330–346 (TNTLTTTVSKNTSVSPL) are compositionally biased toward low complexity.

The protein belongs to the G-protein coupled receptor 1 family. Opsin subfamily. Phosphorylated on some or all of the serine and threonine residues present in the C-terminal region. In terms of tissue distribution, parapineal organ.

Its subcellular location is the membrane. The chain is Parapinopsin from Ictalurus punctatus (Channel catfish).